The chain runs to 367 residues: Undecaprenyl-phosphate alpha-N-acetylglucosaminyl 1-phosphate transferase (367 aa).

10 helical membrane passes run 3 to 23 (LLTV…FLFF), 46 to 66 (LIPL…FGIV), 69 to 89 (YIPH…IGAL), 132 to 152 (VLGP…INAF), 158 to 178 (IDGL…MILW), 187 to 207 (IWCF…LGIL), 213 to 233 (VFMG…ILLE), 242 to 262 (ISPV…VAIM), 294 to 314 (AFVL…LAEY), and 318 to 338 (VPEW…GYCI).

This sequence belongs to the glycosyltransferase 4 family. WecA subfamily. Requires Mg(2+) as cofactor. The cofactor is Mn(2+).

The protein localises to the cell inner membrane. It catalyses the reaction di-trans,octa-cis-undecaprenyl phosphate + UDP-N-acetyl-alpha-D-glucosamine = N-acetyl-alpha-D-glucosaminyl-di-trans,octa-cis-undecaprenyl diphosphate + UMP. The protein operates within bacterial outer membrane biogenesis; LPS O-antigen biosynthesis. It participates in bacterial outer membrane biogenesis; enterobacterial common antigen biosynthesis. In terms of biological role, catalyzes the transfer of the GlcNAc-1-phosphate moiety from UDP-GlcNAc onto the carrier lipid undecaprenyl phosphate (C55-P), yielding GlcNAc-pyrophosphoryl-undecaprenyl (GlcNAc-PP-C55). The sequence is that of Undecaprenyl-phosphate alpha-N-acetylglucosaminyl 1-phosphate transferase from Escherichia coli O157:H7.